Here is a 348-residue protein sequence, read N- to C-terminus: 3-isopropylmalate dehydrogenase (348 aa).

76-87 (GPKWTDPNNRPE) lines the NAD(+) pocket. 4 residues coordinate substrate: arginine 94, arginine 104, arginine 132, and aspartate 217. Mg(2+)-binding residues include aspartate 217, aspartate 241, and aspartate 245. 275–287 (GSAPDIAGKNVAN) contacts NAD(+).

Belongs to the isocitrate and isopropylmalate dehydrogenases family. LeuB type 1 subfamily. In terms of assembly, homodimer. Mg(2+) serves as cofactor. It depends on Mn(2+) as a cofactor.

The protein localises to the cytoplasm. The enzyme catalyses (2R,3S)-3-isopropylmalate + NAD(+) = 4-methyl-2-oxopentanoate + CO2 + NADH. It functions in the pathway amino-acid biosynthesis; L-leucine biosynthesis; L-leucine from 3-methyl-2-oxobutanoate: step 3/4. Catalyzes the oxidation of 3-carboxy-2-hydroxy-4-methylpentanoate (3-isopropylmalate) to 3-carboxy-4-methyl-2-oxopentanoate. The product decarboxylates to 4-methyl-2 oxopentanoate. This is 3-isopropylmalate dehydrogenase from Staphylococcus aureus (strain Mu50 / ATCC 700699).